We begin with the raw amino-acid sequence, 167 residues long: Large ribosomal subunit protein bL9 (167 aa).

The protein belongs to the bacterial ribosomal protein bL9 family.

Functionally, binds to the 23S rRNA. The protein is Large ribosomal subunit protein bL9 of Nitratidesulfovibrio vulgaris (strain ATCC 29579 / DSM 644 / CCUG 34227 / NCIMB 8303 / VKM B-1760 / Hildenborough) (Desulfovibrio vulgaris).